We begin with the raw amino-acid sequence, 271 residues long: Glutamate racemase 3 (271 aa).

Residues 15 to 16 (DS) and 47 to 48 (YG) contribute to the substrate site. The active-site Proton donor/acceptor is the C78. Substrate is bound at residue 79-80 (NT). The active-site Proton donor/acceptor is C185. 186–187 (TH) is a substrate binding site.

The protein belongs to the aspartate/glutamate racemases family.

The enzyme catalyses L-glutamate = D-glutamate. Its pathway is cell wall biogenesis; peptidoglycan biosynthesis. In terms of biological role, provides the (R)-glutamate required for cell wall biosynthesis. This is Glutamate racemase 3 from Caldanaerobacter subterraneus subsp. tengcongensis (strain DSM 15242 / JCM 11007 / NBRC 100824 / MB4) (Thermoanaerobacter tengcongensis).